We begin with the raw amino-acid sequence, 448 residues long: Probable glycine dehydrogenase (decarboxylating) subunit 1 (448 aa).

This sequence belongs to the GcvP family. N-terminal subunit subfamily. The glycine cleavage system is composed of four proteins: P, T, L and H. In this organism, the P 'protein' is a heterodimer of two subunits.

The catalysed reaction is N(6)-[(R)-lipoyl]-L-lysyl-[glycine-cleavage complex H protein] + glycine + H(+) = N(6)-[(R)-S(8)-aminomethyldihydrolipoyl]-L-lysyl-[glycine-cleavage complex H protein] + CO2. Functionally, the glycine cleavage system catalyzes the degradation of glycine. The P protein binds the alpha-amino group of glycine through its pyridoxal phosphate cofactor; CO(2) is released and the remaining methylamine moiety is then transferred to the lipoamide cofactor of the H protein. This Staphylococcus aureus (strain Mu3 / ATCC 700698) protein is Probable glycine dehydrogenase (decarboxylating) subunit 1.